A 210-amino-acid chain; its full sequence is NAD(P)H-quinone oxidoreductase subunit I (210 aa).

2 consecutive 4Fe-4S ferredoxin-type domains span residues 54-83 and 94-123; these read GRIH…VDWA and YSYS…VTED. Residues Cys63, Cys66, Cys69, Cys73, Cys103, Cys106, Cys109, and Cys113 each contribute to the [4Fe-4S] cluster site.

Belongs to the complex I 23 kDa subunit family. As to quaternary structure, NDH-1 is composed of at least 11 different subunits. [4Fe-4S] cluster is required as a cofactor.

The protein localises to the cellular thylakoid membrane. The catalysed reaction is a plastoquinone + NADH + (n+1) H(+)(in) = a plastoquinol + NAD(+) + n H(+)(out). It carries out the reaction a plastoquinone + NADPH + (n+1) H(+)(in) = a plastoquinol + NADP(+) + n H(+)(out). In terms of biological role, NDH-1 shuttles electrons from an unknown electron donor, via FMN and iron-sulfur (Fe-S) centers, to quinones in the respiratory and/or the photosynthetic chain. The immediate electron acceptor for the enzyme in this species is believed to be plastoquinone. Couples the redox reaction to proton translocation, and thus conserves the redox energy in a proton gradient. This is NAD(P)H-quinone oxidoreductase subunit I from Synechococcus sp. (strain JA-2-3B'a(2-13)) (Cyanobacteria bacterium Yellowstone B-Prime).